The following is a 440-amino-acid chain: UDP-glucose 6-dehydrogenase YwqF (440 aa).

NAD(+)-binding positions include N2–L19, V11, D30, K35, T121, and E155. Residues E151 to E155, K204, N208, F249 to G253, and G257 contribute to the substrate site. Residue C260 is the Nucleophile of the active site. K263 provides a ligand contact to NAD(+). K320 serves as a coordination point for substrate. Position 327 (R327) interacts with NAD(+).

This sequence belongs to the UDP-glucose/GDP-mannose dehydrogenase family. In terms of processing, phosphorylated on tyrosine residue(s). Phosphorylated by YwqD and dephosphorylated by YwqE in vitro.

The protein resides in the cytoplasm. The enzyme catalyses UDP-alpha-D-glucose + 2 NAD(+) + H2O = UDP-alpha-D-glucuronate + 2 NADH + 3 H(+). The protein operates within nucleotide-sugar biosynthesis; UDP-alpha-D-glucuronate biosynthesis; UDP-alpha-D-glucuronate from UDP-alpha-D-glucose: step 1/1. With respect to regulation, competitively inhibited by UDP-glucose. Activated by phosphorylation, which may increase affinity for NAD(+); inhibited by dephosphorylation. Functionally, catalyzes the conversion of UDP-glucose into UDP-glucuronate, one of the precursors of teichuronic acid. This Bacillus subtilis (strain 168) protein is UDP-glucose 6-dehydrogenase YwqF (ywqF).